The sequence spans 535 residues: CTP synthase (535 aa).

Residues 1–268 (MSTKYIFVTG…DQIVCDHLKL (268 aa)) form an amidoligase domain region. A CTP-binding site is contributed by serine 14. Position 14 (serine 14) interacts with UTP. Residue 15-20 (SMGKGI) participates in ATP binding. An L-glutamine-binding site is contributed by tyrosine 55. Aspartate 72 lines the ATP pocket. Residues aspartate 72 and glutamate 142 each contribute to the Mg(2+) site. Residues 149–151 (DME), 189–194 (KTKIAQ), and lysine 225 each bind CTP. UTP-binding positions include 189–194 (KTKIAQ) and lysine 225. Valine 243 is a binding site for ATP. Residues 293 to 535 (KIALVGKYVE…FIRVAVENSK (243 aa)) form the Glutamine amidotransferase type-1 domain. Glycine 355 serves as a coordination point for L-glutamine. Cysteine 382 acts as the Nucleophile; for glutamine hydrolysis in catalysis. Residues 383–386 (LGMQ), glutamate 406, and arginine 464 each bind L-glutamine. Active-site residues include histidine 509 and glutamate 511.

This sequence belongs to the CTP synthase family. In terms of assembly, homotetramer. In contrast to E.coli CTP synthase, remains a tetramer at dilute enzyme concentrations even in the absence of Mg(2+), ATP and UTP.

The enzyme catalyses UTP + L-glutamine + ATP + H2O = CTP + L-glutamate + ADP + phosphate + 2 H(+). It catalyses the reaction L-glutamine + H2O = L-glutamate + NH4(+). The catalysed reaction is UTP + NH4(+) + ATP = CTP + ADP + phosphate + 2 H(+). It functions in the pathway pyrimidine metabolism; CTP biosynthesis via de novo pathway; CTP from UDP: step 2/2. Allosterically activated by GTP, when glutamine is the substrate. GTP has no effect on the reaction when ammonia is the substrate. The allosteric effector GTP functions by stabilizing the protein conformation that binds the tetrahedral intermediate(s) formed during glutamine hydrolysis. Also activated by magnesium. Allosterically inhibited by CTP. Catalyzes the ATP-dependent amination of UTP to CTP with either L-glutamine or ammonia as the source of nitrogen. Is essential for the synthesis of CTP de novo. Contrary to other bacterial CTP synthases, the lactococcal enzyme is also able to convert dUTP to dCTP, but this reaction may not play a significant physiological role. Regulates intracellular CTP levels through interactions with the four ribonucleotide triphosphates. This Lactococcus lactis subsp. cremoris (strain MG1363) protein is CTP synthase.